The sequence spans 583 residues: Laminarase-resistance protein LRE1 (583 aa).

The segment covering 1–24 (MPNTHTQHVQISEPNPVNTLSTPS) has biased composition (polar residues). Disordered stretches follow at residues 1–31 (MPNTHTQHVQISEPNPVNTLSTPSKRGHRHR) and 330–380 (LKDN…HMQH). Basic and acidic residues-rich tracts occupy residues 332 to 342 (DNPRYAKDGYP) and 354 to 366 (LDSDKRQDFSGES). Residues serine 393 and serine 398 each carry the phosphoserine modification. Residues 457 to 486 (SCTPDGKEEMNRLKSNDSNEYSKSEGQIRT) form a disordered region. Positions 461 to 479 (DGKEEMNRLKSNDSNEYSK) are enriched in basic and acidic residues. 2 positions are modified to phosphoserine: serine 516 and serine 552.

Phosphorylated by CDC28/CDK1.

Its function is as follows. Overexpression affects chitinase expression, cell separation and budding pattern, and increases trehalose accumulation and heat resistance by inhibiting protein kinase CBK1. Overexpression also suppresses temperature-induced hyperosmosensitivity and sensitivity to cell wall degrading enzymes. Overexpression of both LRE1 and PBN1 confers resistance to laminarinase. This Saccharomyces cerevisiae (strain ATCC 204508 / S288c) (Baker's yeast) protein is Laminarase-resistance protein LRE1 (LRE1).